We begin with the raw amino-acid sequence, 178 residues long: Peptidyl-prolyl cis-trans isomerase (178 aa).

Positions 1–17 are cleaved as a signal peptide; sequence MKLLFFFLVLAVSAAVA. The region spanning 26–177 is the PPIase cyclophilin-type domain; it reads FMDIEIDGES…KIAKITDIGL (152 aa).

Belongs to the cyclophilin-type PPIase family. PPIase A subfamily.

The catalysed reaction is [protein]-peptidylproline (omega=180) = [protein]-peptidylproline (omega=0). PPIases accelerate the folding of proteins. It catalyzes the cis-trans isomerization of proline imidic peptide bonds in oligopeptides. Up-regulates interferon gamma production by bovine T-cells. Stimulates high levels of IFN-gamma production by peripheral blood mononuclear cells and T-cells. The IFN-gamma-inducing effect is blocked by cyclosporin A (CsA). In Neospora caninum (Coccidian parasite), this protein is Peptidyl-prolyl cis-trans isomerase.